A 254-amino-acid chain; its full sequence is 7-cyano-7-deazaguanine synthase (254 aa).

30–40 serves as a coordination point for ATP; it reads YSGGQDSATCL. Zn(2+) contacts are provided by C218, C233, C236, and C239.

Belongs to the QueC family. The cofactor is Zn(2+).

The enzyme catalyses 7-carboxy-7-deazaguanine + NH4(+) + ATP = 7-cyano-7-deazaguanine + ADP + phosphate + H2O + H(+). Its pathway is purine metabolism; 7-cyano-7-deazaguanine biosynthesis. Functionally, catalyzes the ATP-dependent conversion of 7-carboxy-7-deazaguanine (CDG) to 7-cyano-7-deazaguanine (preQ(0)). The chain is 7-cyano-7-deazaguanine synthase from Zymomonas mobilis subsp. mobilis (strain ATCC 31821 / ZM4 / CP4).